Here is a 579-residue protein sequence, read N- to C-terminus: Probable cytochrome c oxidase subunit 1-alpha (579 aa).

A disordered region spans residues 1 to 21; that stretch reads MSILNEPQGAAAAEDSYENEL. Residues 44–64 form a helical membrane-spanning segment; sequence IGTLYLVTSFAFFCIGGVMAL. Fe(II)-heme a is bound at residue histidine 90. Transmembrane regions (helical) follow at residues 93–113, 125–145, 174–194, 217–237, 262–282, and 295–315; these read IMLL…IMPL, LNMF…GGFL, MWIM…VNFI, VLLT…ALFA, LFWF…FGII, and FGYM…VTVW. Cu cation contacts are provided by histidine 268 and tyrosine 272. A cross-link (1'-histidyl-3'-tyrosine (His-Tyr)) is located at residues 268–272; that stretch reads HPEVY. Cu cation contacts are provided by histidine 317 and histidine 318. 5 helical membrane-spanning segments follow: residues 319–339, 363–383, 397–417, 437–457, and 480–500; these read MYVT…LIAV, MLWA…GVIL, FVVA…MFSG, ITFW…HWLG, and ISTI…YNVW. Position 401 (histidine 401) interacts with heme a3. Histidine 403 serves as a coordination point for Fe(II)-heme a.

Belongs to the heme-copper respiratory oxidase family. Associates with subunits II, III and IV to form cytochrome c oxidase. It depends on Cu(2+) as a cofactor. The cofactor is heme.

The protein localises to the cell membrane. The enzyme catalyses 4 Fe(II)-[cytochrome c] + O2 + 8 H(+)(in) = 4 Fe(III)-[cytochrome c] + 2 H2O + 4 H(+)(out). The protein operates within energy metabolism; oxidative phosphorylation. Functionally, cytochrome c oxidase is the component of the respiratory chain that catalyzes the reduction of oxygen to water. Subunits 1-3 form the functional core of the enzyme complex. CO I is the catalytic subunit of the enzyme. Electrons originating in cytochrome c are transferred via the copper A center of subunit 2 and heme A of subunit 1 to the bimetallic center formed by heme A3 and copper B. The sequence is that of Probable cytochrome c oxidase subunit 1-alpha (ctaD1) from Streptomyces avermitilis (strain ATCC 31267 / DSM 46492 / JCM 5070 / NBRC 14893 / NCIMB 12804 / NRRL 8165 / MA-4680).